An 85-amino-acid chain; its full sequence is Large ribosomal subunit protein bL27 (85 aa).

Positions 1–22 (MAHKKAGGSTNNGRDSESKRLG) are disordered.

The protein belongs to the bacterial ribosomal protein bL27 family.

This Vibrio atlanticus (strain LGP32) (Vibrio splendidus (strain Mel32)) protein is Large ribosomal subunit protein bL27.